The following is an 857-amino-acid chain: DNA mismatch repair protein MutS (857 aa).

621–628 (GPNMGGKS) serves as a coordination point for ATP.

The protein belongs to the DNA mismatch repair MutS family.

Functionally, this protein is involved in the repair of mismatches in DNA. It is possible that it carries out the mismatch recognition step. This protein has a weak ATPase activity. The protein is DNA mismatch repair protein MutS of Francisella tularensis subsp. tularensis (strain SCHU S4 / Schu 4).